Here is a 761-residue protein sequence, read N- to C-terminus: Disintegrin and metalloproteinase domain-containing protein 24 (761 aa).

Positions 1 to 34 are cleaved as a signal peptide; that stretch reads MVAMSEALVHARITLLQAWLRMLLFSSVWPPTWC. Positions 35–200 are excised as a propeptide; that stretch reads AEYKGPPETV…GKSTRMQSIY (166 aa). The Extracellular portion of the chain corresponds to 35–697; that stretch reads AEYKGPPETV…SKKDAPEKPN (663 aa). An N-linked (GlcNAc...) asparagine glycan is attached at Asn-140. Positions 172 to 179 match the Cysteine switch motif; that stretch reads MRCGLTDE. Cys-174 is a Zn(2+) binding site. Residues 208 to 400 enclose the Peptidase M12B domain; sequence LYIKLALVID…KSCIHREPRP (193 aa). Asn-227 and Asn-301 each carry an N-linked (GlcNAc...) asparagine glycan. Intrachain disulfides connect Cys-323–Cys-393, Cys-357–Cys-379, Cys-359–Cys-364, Cys-465–Cys-485, Cys-635–Cys-646, Cys-640–Cys-652, and Cys-654–Cys-663. Zn(2+) is bound at residue His-342. Glu-343 is a catalytic residue. 2 residues coordinate Zn(2+): His-346 and His-352. Asn-378, Asn-390, and Asn-479 each carry an N-linked (GlcNAc...) asparagine glycan. Residues 406–493 enclose the Disintegrin domain; the sequence is LKVCGNGIVE…ECPEDLFVQD (88 aa). One can recognise an EGF-like domain in the interval 631 to 664; the sequence is WVNDCTPETCNMKGVCNNKQHCHCDVGWSPPNCQ. The helical transmembrane segment at 698 to 718 threads the bilayer; the sequence is VIIWLLPIICVAVVLSVLFCL. The Cytoplasmic portion of the chain corresponds to 719–761; the sequence is SGATKKSREAAASQPAEERVKPPYEGAEPSYETVKPPDEWANP. Residues 725 to 761 form a disordered region; it reads SREAAASQPAEERVKPPYEGAEPSYETVKPPDEWANP.

In terms of assembly, monomer. The cofactor is Zn(2+). In terms of processing, the prodomain is removed during sperm passage through the caput epididymis after the protein has reached the cell surface. Not processed in the secretory pathway. As to expression, expressed exclusively in testis and more specifically on the surface of mature sperm (at protein level).

It localises to the membrane. In terms of biological role, plasma membrane protease present on mature sperm that may be involved in sperm function during epididymal maturation and/or fertilization. The chain is Disintegrin and metalloproteinase domain-containing protein 24 from Mus musculus (Mouse).